We begin with the raw amino-acid sequence, 329 residues long: Quinone oxidoreductase (329 aa).

The residue at position 2 (alanine 2) is an N-acetylalanine. Lysine 23 is modified (N6-acetyllysine). NADP(+) contacts are provided by residues tyrosine 53, 158–161 (SGGV), glycine 181, histidine 200, asparagine 229, 246–249 (VGSR), and 269–271 (VAL). Position 248 is a phosphoserine (serine 248).

The protein belongs to the zinc-containing alcohol dehydrogenase family. Quinone oxidoreductase subfamily. Homotetramer.

The protein localises to the cytoplasm. The enzyme catalyses 2 a quinone + NADPH + H(+) = 2 a 1,4-benzosemiquinone + NADP(+). In terms of biological role, does not have alcohol dehydrogenase activity. Binds NADP and acts through a one-electron transfer process. Orthoquinones, such as 1,2-naphthoquinone or 9,10-phenanthrenequinone, are the best substrates (in vitro). May act in the detoxification of xenobiotics. Interacts with (AU)-rich elements (ARE) in the 3'-UTR of target mRNA species and enhances their stability. NADPH binding interferes with mRNA binding. This Sus scrofa (Pig) protein is Quinone oxidoreductase (CRYZ).